The chain runs to 412 residues: Divalent metal cation transporter MntH (412 aa).

Helical transmembrane passes span 19–39, 46–66, 94–114, 122–142, 156–176, 196–216, 241–261, 290–310, 329–349, 350–370, and 389–409; these read LALM…GNFA, ASFG…AMLI, VWFY…AEFI, LILG…TFLI, VIGG…IFSQ, AVFL…IYLH, IAMT…AAAF, VFGL…TLAG, TITM…TRIL, VMSQ…LLIF, and IGWM…VGTA.

It belongs to the NRAMP family.

The protein resides in the cell inner membrane. In terms of biological role, h(+)-stimulated, divalent metal cation uptake system. This chain is Divalent metal cation transporter MntH, found in Citrobacter koseri (strain ATCC BAA-895 / CDC 4225-83 / SGSC4696).